The primary structure comprises 156 residues: Low molecular weight protein-tyrosine-phosphatase YfkJ (156 aa).

The active-site Nucleophile is the Cys-8. The active site involves Arg-14. The Proton donor role is filled by Asp-125.

The protein belongs to the low molecular weight phosphotyrosine protein phosphatase family.

It carries out the reaction O-phospho-L-tyrosyl-[protein] + H2O = L-tyrosyl-[protein] + phosphate. Its activity is regulated as follows. Efficiently inhibited by Cu(2+) ion, Zn(2+) ion and N-ethylmaleimide, while the addition of Mg(2+), Ca(2+) or Fe(3+) ions has minimal effect. Inhibited in a competitive manner by vanadate. Dephosphorylates the phosphotyrosine-containing proteins. Involved in ethanol stress resistance. The polypeptide is Low molecular weight protein-tyrosine-phosphatase YfkJ (yfkJ) (Bacillus subtilis (strain 168)).